A 655-amino-acid chain; its full sequence is MGIFSIANQHIRFAVKLATAIVLALFVGFHFQLETPRWAVLTAAIVAAGPAFAAGGEPYSGAIRYRGFLRIIGTFIGCIAGLVIIIAMIRAPLLMILVCCIWAGFCTWISSLVRIENSYAWGLAGYTALIIVITIQPEPLLTPQFAVERCSEIVIGIVCAIMADLLFSPRSIKQEVDRELESLLVAQYQLMQLCIKHGDGEVVDKAWGDLVRRTTALQGMRSNLNMESSRWARANRRLKAINTLSLTLITQSCETYLIQNTRPELITDTFREFFDTPVETAQDVHKQLKRLRRVIAWTGERETPVTIYSWVAAATRYQLLKRGVISNTKINATEEEILQGEPEVKVESAERHHAMVNFWRTTLSCILGTLFWLWTGWTSGSGAMVMIAVVTSLAMRLPNPRMVAIDFIYGTLAALPLGLLYFLVIIPNTQQSMLLLCISLAVLGFFLGIEVQKRRLGSMGALASTINIIVLDNPMTFHFNQFLDSALGQIVGCVLAFTVILLVRDKSRDRTGRVLLNQFVSAAVSAMTTNVARRKENHLPALYQQLFLLMNKFPGDLPKFRLALTMIIAHQRLRDAPIPVNEDLSAFHRQMRRTADHVISARSDDKRRRYFGQLLEELEIYQEKLRIWQAPPQVTEPVHRLTGMLHKYQHALTDS.

11 consecutive transmembrane segments (helical) span residues 13–33 (FAVKLATAIVLALFVGFHFQL), 38–58 (WAVLTAAIVAAGPAFAAGGEP), 69–89 (LRIIGTFIGCIAGLVIIIAMI), 93–113 (LLMILVCCIWAGFCTWISSLV), 121–141 (WGLAGYTALIIVITIQPEPLL), 152–172 (EIVIGIVCAIMADLLFSPRSI), 370–390 (LFWLWTGWTSGSGAMVMIAVV), 407–427 (FIYGTLAALPLGLLYFLVIIP), 431–451 (QSMLLLCISLAVLGFFLGIEV), 459–479 (MGALASTINIIVLDNPMTFHF), and 482–502 (FLDSALGQIVGCVLAFTVILL).

The protein belongs to the aromatic acid exporter ArAE (TC 2.A.85) family.

The protein localises to the cell inner membrane. Forms an efflux pump with AaeA. Could function as a metabolic relief valve, allowing to eliminate certain compounds when they accumulate to high levels in the cell. The sequence is that of p-hydroxybenzoic acid efflux pump subunit AaeB from Escherichia coli O7:K1 (strain IAI39 / ExPEC).